The chain runs to 422 residues: Serine hydroxymethyltransferase (422 aa).

(6S)-5,6,7,8-tetrahydrofolate contacts are provided by residues leucine 119 and 123–125 (GHL). Lysine 228 is modified (N6-(pyridoxal phosphate)lysine). (6S)-5,6,7,8-tetrahydrofolate contacts are provided by residues glutamate 244 and 352-354 (SPF).

It belongs to the SHMT family. In terms of assembly, homodimer. Requires pyridoxal 5'-phosphate as cofactor.

It is found in the cytoplasm. The catalysed reaction is (6R)-5,10-methylene-5,6,7,8-tetrahydrofolate + glycine + H2O = (6S)-5,6,7,8-tetrahydrofolate + L-serine. Its pathway is one-carbon metabolism; tetrahydrofolate interconversion. It participates in amino-acid biosynthesis; glycine biosynthesis; glycine from L-serine: step 1/1. In terms of biological role, catalyzes the reversible interconversion of serine and glycine with tetrahydrofolate (THF) serving as the one-carbon carrier. This reaction serves as the major source of one-carbon groups required for the biosynthesis of purines, thymidylate, methionine, and other important biomolecules. Also exhibits THF-independent aldolase activity toward beta-hydroxyamino acids, producing glycine and aldehydes, via a retro-aldol mechanism. This Magnetococcus marinus (strain ATCC BAA-1437 / JCM 17883 / MC-1) protein is Serine hydroxymethyltransferase.